A 526-amino-acid chain; its full sequence is Phosphoenolpyruvate carboxykinase (ATP) (526 aa).

3 residues coordinate substrate: Arg55, Tyr190, and Lys196. ATP contacts are provided by residues Lys196, His215, and 231–239 (GLSGTGKTT). Lys196 and His215 together coordinate Mn(2+). Position 252 (Asp252) interacts with Mn(2+). ATP-binding residues include Glu280, Arg317, and Thr442. A substrate-binding site is contributed by Arg317.

It belongs to the phosphoenolpyruvate carboxykinase (ATP) family. The cofactor is Mn(2+).

The protein resides in the cytoplasm. It carries out the reaction oxaloacetate + ATP = phosphoenolpyruvate + ADP + CO2. It functions in the pathway carbohydrate biosynthesis; gluconeogenesis. In terms of biological role, involved in the gluconeogenesis. Catalyzes the conversion of oxaloacetate (OAA) to phosphoenolpyruvate (PEP) through direct phosphoryl transfer between the nucleoside triphosphate and OAA. The protein is Phosphoenolpyruvate carboxykinase (ATP) of Alkaliphilus oremlandii (strain OhILAs) (Clostridium oremlandii (strain OhILAs)).